The following is a 167-amino-acid chain: UPF0114 protein in repA1-repA2 intergenic region (167 aa).

The next 3 membrane-spanning stretches (helical) occupy residues 15-35 (LMFP…LKFF), 53-73 (LVLA…LVMV), and 136-156 (IMLC…MAYI).

This sequence belongs to the UPF0114 family.

It is found in the cell membrane. This Buchnera aphidicola subsp. Schizaphis graminum (strain Sg) protein is UPF0114 protein in repA1-repA2 intergenic region.